The sequence spans 373 residues: Putative F-box protein At1g76830 (373 aa).

Residues 4-49 form the F-box domain; it reads ITSFENLPEELKREILLRMSPNSLVTCSRVSKKLASMIRTKSFKEL.

This chain is Putative F-box protein At1g76830, found in Arabidopsis thaliana (Mouse-ear cress).